Reading from the N-terminus, the 85-residue chain is U4-theraphotoxin-Hhn1a (85 aa).

The first 22 residues, 1-22, serve as a signal peptide directing secretion; the sequence is MKVTLIAILTCAAALVLHTTAA. Residues 23–48 constitute a propeptide that is removed on maturation; sequence EELEAESQLMEVGMPDTELAAVDEER. Disulfide bonds link cysteine 52–cysteine 66, cysteine 56–cysteine 77, and cysteine 71–cysteine 82.

It belongs to the neurotoxin 12 (Hwtx-2) family. 02 (Hwtx-2) subfamily. Monomer. Expressed by the venom gland.

The protein resides in the secreted. Its function is as follows. Neurotoxin active on both insects and mammals. The sequence is that of U4-theraphotoxin-Hhn1a from Cyriopagopus hainanus (Chinese bird spider).